The chain runs to 147 residues: 3-dehydroquinate dehydratase (147 aa).

Catalysis depends on tyrosine 23, which acts as the Proton acceptor. Residues asparagine 74, histidine 80, and aspartate 87 each coordinate substrate. Histidine 100 acts as the Proton donor in catalysis. Residues leucine 101–serine 102 and arginine 111 contribute to the substrate site.

This sequence belongs to the type-II 3-dehydroquinase family. Homododecamer.

It carries out the reaction 3-dehydroquinate = 3-dehydroshikimate + H2O. It functions in the pathway metabolic intermediate biosynthesis; chorismate biosynthesis; chorismate from D-erythrose 4-phosphate and phosphoenolpyruvate: step 3/7. In terms of biological role, catalyzes a trans-dehydration via an enolate intermediate. This Clostridium botulinum (strain Kyoto / Type A2) protein is 3-dehydroquinate dehydratase.